The following is a 424-amino-acid chain: Keratin, type I cytoskeletal 20 (424 aa).

Positions 1–69 (MDFSRRSFHR…TGGGDLFVGN (69 aa)) are head. S13 bears the Phosphoserine; by MAPKAPK2, MAPKAPK3 and PKC mark. Positions 70-105 (EKMAMQNLNDRLASYLEKVRTLEQSNSKLEVQIKQW) are coil 1A. Residues 70 to 381 (EKMAMQNLND…RLLEGEDVKT (312 aa)) enclose the IF rod domain. Residues 106-123 (YETNAPRAGRDYSAYYRQ) form a linker 1 region. The segment at 124–215 (IEELRSQIKD…KEHQEEVDGL (92 aa)) is coil 1B. The tract at residues 216–238 (HKHLGNTVNVEVDAAPGLNLGVI) is linker 12. The interval 239–377 (MNEMRQKYEV…ATYRRLLEGE (139 aa)) is coil 2. The tail stretch occupies residues 378–424 (DVKTTEYQLSTLEERDIKKTRKIKTVVQEVVDGKVVSSEVKEVEENI).

Belongs to the intermediate filament family. As to quaternary structure, heterotetramer of two type I and two type II keratins. Associates with KRT8. In terms of processing, hyperphosphorylation at Ser-13 occurs during the early stages of apoptosis but becomes less prominent during the later stages. Phosphorylation at Ser-13 also increases in response to stress brought on by cell injury. Proteolytically cleaved by caspases during apoptosis. Cleavage occurs at Asp-228. As to expression, expressed predominantly in the intestinal epithelium. Expressed in luminal cells of colonic mucosa. Also expressed in the Merkel cells of keratinized oral mucosa; specifically at the tips of some rete ridges of the gingival mucosa, in the basal layer of the palatal mucosa and in the taste buds of lingual mucosa.

It localises to the cytoplasm. Plays a significant role in maintaining keratin filament organization in intestinal epithelia. When phosphorylated, plays a role in the secretion of mucin in the small intestine. This Homo sapiens (Human) protein is Keratin, type I cytoskeletal 20 (KRT20).